Here is an 84-residue protein sequence, read N- to C-terminus: uncharacterized protein (84 aa).

This is an uncharacterized protein from Bacillus subtilis (strain 168).